Here is a 47-residue protein sequence, read N- to C-terminus: Conotoxin reg3.11 (47 aa).

The propeptide occupies 1-31; the sequence is DQPVERHAENKRHLIPAVMRAMTMNADRRVQ. Intrachain disulfides connect Cys32–Cys44, Cys33–Cys42, and Cys38–Cys45. The propeptide occupies 46–47; sequence YH.

The protein belongs to the conotoxin M superfamily. Expressed by the venom duct.

The protein resides in the secreted. The chain is Conotoxin reg3.11 from Conus regius (Crown cone).